Here is a 148-residue protein sequence, read N- to C-terminus: Nucleoside diphosphate kinase (148 aa).

ATP contacts are provided by Lys9, Phe57, Arg85, Thr91, Arg102, and Asn112. Thr91 carries the phosphothreonine modification. His115 serves as the catalytic Pros-phosphohistidine intermediate. Ser122 is subject to Phosphoserine.

It belongs to the NDK family. Homotetramer. The cofactor is Mg(2+).

Its subcellular location is the cytoplasm. It carries out the reaction a 2'-deoxyribonucleoside 5'-diphosphate + ATP = a 2'-deoxyribonucleoside 5'-triphosphate + ADP. It catalyses the reaction a ribonucleoside 5'-diphosphate + ATP = a ribonucleoside 5'-triphosphate + ADP. In terms of biological role, major role in the synthesis of nucleoside triphosphates other than ATP. The ATP gamma phosphate is transferred to the NDP beta phosphate via a ping-pong mechanism, using a phosphorylated active-site intermediate. The chain is Nucleoside diphosphate kinase from Bacillus cereus (strain ATCC 10987 / NRS 248).